A 288-amino-acid chain; its full sequence is Anthranilate synthase beta subunit 1, chloroplastic (288 aa).

Residues 1–58 (MACSHLAAAAAAASPAAARSPAASSAATASAFARLSATPRVASGGLAVRGQRGVAAVV) constitute a chloroplast transit peptide. Residues 83–282 (PIIVIDNYDS…VRFIEELEKQ (200 aa)) enclose the Glutamine amidotransferase type-1 domain. L-glutamine is bound at residue 134–136 (GPG). Cys161 serves as the catalytic Nucleophile. L-glutamine contacts are provided by residues Gln165 and 215 to 216 (SL). Active-site residues include His256 and Glu258.

In terms of assembly, heterotetramer consisting of two non-identical subunits: a beta subunit and a large alpha subunit. As to expression, expressed in roots and leaves.

It localises to the plastid. The protein resides in the chloroplast. The enzyme catalyses chorismate + L-glutamine = anthranilate + pyruvate + L-glutamate + H(+). Its pathway is amino-acid biosynthesis; L-tryptophan biosynthesis; L-tryptophan from chorismate: step 1/5. In terms of biological role, part of a heterotetrameric complex that catalyzes the two-step biosynthesis of anthranilate, an intermediate in the biosynthesis of L-tryptophan. In the first step, the glutamine-binding beta subunit of anthranilate synthase (AS) provides the glutamine amidotransferase activity which generates ammonia as a substrate that, along with chorismate, is used in the second step, catalyzed by the large alpha subunit of AS to produce anthranilate. This is Anthranilate synthase beta subunit 1, chloroplastic from Oryza sativa subsp. japonica (Rice).